Here is a 359-residue protein sequence, read N- to C-terminus: Histidinol-phosphate aminotransferase (359 aa).

Position 217 is an N6-(pyridoxal phosphate)lysine (Lys217).

Belongs to the class-II pyridoxal-phosphate-dependent aminotransferase family. Histidinol-phosphate aminotransferase subfamily. Homodimer. Pyridoxal 5'-phosphate is required as a cofactor.

It carries out the reaction L-histidinol phosphate + 2-oxoglutarate = 3-(imidazol-4-yl)-2-oxopropyl phosphate + L-glutamate. It participates in amino-acid biosynthesis; L-histidine biosynthesis; L-histidine from 5-phospho-alpha-D-ribose 1-diphosphate: step 7/9. In Salmonella paratyphi A (strain ATCC 9150 / SARB42), this protein is Histidinol-phosphate aminotransferase.